Here is a 637-residue protein sequence, read N- to C-terminus: MASRTEHADLSDLSGDSGFKRIATISLAALGVVFGDIGTSPLYAIRECFHGDYSIPVSQQNVLGVLSLIFWALVLIVSLKYLTFIMKADNEGEGGILALTALIVAHSKKNRHERWFLVGIGLFGASLLYGDGMITPAISVLSAVEGLQIIAPAFKDLVIPITVIILTGLFLYQHNGTARVGALFGPVILLWFAVIGVLGLVEIVRYPEILRAVLPWYGFSFLLNNHLQGFMVLGAVFLSVTGAEALYADMGHFGKTPIRFTWILFVLPALLLNYFGQGALLLFAPQESHHPFYGLVPSWAMIPMVILATSATIIASQALITGVFSLTQQAIQLGYLPRITVKHTSAGHRGQIYVPGANWALMYATIGLVIGFGSSSKLAAAYGVAVTATMLISTILFYYVARDIWRWNKLATNLLVSFFFVIDLAFFGASATKLFHGAWFPLVIGLVLFTLMLTWKQGRSLLLQQIKDRTLTVEEFVQSLALQQPQRVTGQAVYLTANPDVIPIALLHNLRHNKILHSEVALFHFSLERVPRVPNSKKVEIKKYGDGLCRVVARYGFMEYPSIRQVFSLAQEKGLHFRLETTSFFLSREKIVTGLKSKMGLWRKKLFALMVRNALSATSYYDMPSGQVIEIGMQVQI.

A run of 12 helical transmembrane segments spans residues 25-45 (ISLAALGVVFGDIGTSPLYAI), 62-82 (VLGVLSLIFWALVLIVSLKYL), 115-135 (WFLVGIGLFGASLLYGDGMIT), 149-169 (IIAPAFKDLVIPITVIILTGL), 180-200 (VGALFGPVILLWFAVIGVLGL), 227-247 (LQGFMVLGAVFLSVTGAEALY), 263-283 (ILFVLPALLLNYFGQGALLLF), 295-315 (LVPSWAMIPMVILATSATIIA), 352-372 (IYVPGANWALMYATIGLVIGF), 378-398 (LAAAYGVAVTATMLISTILFY), 410-430 (LATNLLVSFFFVIDLAFFGAS), and 434-454 (LFHGAWFPLVIGLVLFTLMLT).

It belongs to the HAK/KUP transporter (TC 2.A.72) family.

It is found in the cell inner membrane. It carries out the reaction K(+)(in) + H(+)(in) = K(+)(out) + H(+)(out). Its function is as follows. Transport of potassium into the cell. Likely operates as a K(+):H(+) symporter. The chain is Probable potassium transport system protein Kup from Chlorobium phaeobacteroides (strain DSM 266 / SMG 266 / 2430).